The primary structure comprises 416 residues: Glutamyl-tRNA reductase (416 aa).

Residues 49 to 52 (TCNR), Ser-105, 110 to 112 (EPQ), and Gln-116 contribute to the substrate site. Cys-50 (nucleophile) is an active-site residue. Residue 185–190 (GAGETI) participates in NADP(+) binding.

It belongs to the glutamyl-tRNA reductase family. In terms of assembly, homodimer.

The enzyme catalyses (S)-4-amino-5-oxopentanoate + tRNA(Glu) + NADP(+) = L-glutamyl-tRNA(Glu) + NADPH + H(+). It functions in the pathway porphyrin-containing compound metabolism; protoporphyrin-IX biosynthesis; 5-aminolevulinate from L-glutamyl-tRNA(Glu): step 1/2. Functionally, catalyzes the NADPH-dependent reduction of glutamyl-tRNA(Glu) to glutamate 1-semialdehyde (GSA). The chain is Glutamyl-tRNA reductase from Shewanella frigidimarina (strain NCIMB 400).